The primary structure comprises 1175 residues: Chromosome partition protein Smc (1175 aa).

32-39 (PNGCGKSN) serves as a coordination point for ATP. Residues 170–504 (VSKYKERRRE…ALKALQEKVK (335 aa)) adopt a coiled-coil conformation. In terms of domain architecture, SMC hinge spans 524-625 (LWSRIAIEPG…YTAPTLEEAL (102 aa)). 2 coiled-coil regions span residues 684-918 (DESR…FQLK) and 944-1022 (SQSI…ELLS). The segment at 807 to 849 (RQAQEATFSRRSLEARRGELSRTIETASQQARSLADEQQRAQD) is disordered. Over residues 817–828 (RSLEARRGELSR) the composition is skewed to basic and acidic residues. A compositionally biased stretch (polar residues) spans 829-838 (TIETASQQAR). The segment covering 840–849 (LADEQQRAQD) has biased composition (basic and acidic residues).

The protein belongs to the SMC family. As to quaternary structure, homodimer.

It is found in the cytoplasm. Its function is as follows. Required for chromosome condensation and partitioning. The sequence is that of Chromosome partition protein Smc from Delftia acidovorans (strain DSM 14801 / SPH-1).